The primary structure comprises 111 residues: Antitoxin PrlF (111 aa).

One can recognise a SpoVT-AbrB domain in the interval 12–59 (TTESKVTIRGQTTIPAPVREALKLKPGQDSIHYEILPGGQVFMCRLGD).

Homodimer; forms a complex with YhaV with stoichiometry PrlF(2)-YhaV(4), possibly as a YhaV(2)-PrlF(2)-YhaV(2) complex like the MazFE complex. This complex is seen to dimerize in solution.

It localises to the cytoplasm. Its function is as follows. Antitoxin component of a type II toxin-antitoxin (TA) system. Labile antitoxin that binds to the YhaV toxin and neutralizes its ribonuclease activity. Also acts as a transcription factor. The YhaV/PrlF complex binds the prlF-yhaV operon, probably negatively regulating its expression. In terms of biological role, negatively regulates its own expression as well as relieving the export block imposed by high-level synthesis of the LamB-LacZ hybrid protein. Overexpression leads to increased doubling time and also suppresses a htrA (degP) null phenotype. This Escherichia coli (strain K12) protein is Antitoxin PrlF (prlF).